The primary structure comprises 25 residues: Cysteine-rich venom protein 25 (25 aa).

The tract at residues 1 to 25 (NVDFNSESTRRKKKQKEIVDLXNSL) is disordered.

It belongs to the CRISP family. Contains 8 disulfide bonds. As to expression, expressed by the venom gland.

It localises to the secreted. The sequence is that of Cysteine-rich venom protein 25 from Naja haje haje (Egyptian cobra).